The following is a 360-amino-acid chain: Phospho-N-acetylmuramoyl-pentapeptide-transferase (360 aa).

Transmembrane regions (helical) follow at residues 25–45, 73–93, 97–117, 134–154, 168–188, 199–219, 236–256, 263–283, 288–308, and 338–358; these read RGIL…PWMI, TMGG…WADL, YVWV…VDDY, YFWQ…TAPT, VTIP…VGSS, GLAI…CYLS, SGEL…FLWF, VFMG…IAVI, IVLF…VIQV, and VIVR…ATLK.

This sequence belongs to the glycosyltransferase 4 family. MraY subfamily. Mg(2+) is required as a cofactor.

The protein resides in the cell inner membrane. It catalyses the reaction UDP-N-acetyl-alpha-D-muramoyl-L-alanyl-gamma-D-glutamyl-meso-2,6-diaminopimeloyl-D-alanyl-D-alanine + di-trans,octa-cis-undecaprenyl phosphate = di-trans,octa-cis-undecaprenyl diphospho-N-acetyl-alpha-D-muramoyl-L-alanyl-D-glutamyl-meso-2,6-diaminopimeloyl-D-alanyl-D-alanine + UMP. It participates in cell wall biogenesis; peptidoglycan biosynthesis. Its function is as follows. Catalyzes the initial step of the lipid cycle reactions in the biosynthesis of the cell wall peptidoglycan: transfers peptidoglycan precursor phospho-MurNAc-pentapeptide from UDP-MurNAc-pentapeptide onto the lipid carrier undecaprenyl phosphate, yielding undecaprenyl-pyrophosphoryl-MurNAc-pentapeptide, known as lipid I. In Pseudomonas putida (strain ATCC 700007 / DSM 6899 / JCM 31910 / BCRC 17059 / LMG 24140 / F1), this protein is Phospho-N-acetylmuramoyl-pentapeptide-transferase.